We begin with the raw amino-acid sequence, 635 residues long: DNA primase (635 aa).

Residues 41–65 (CPFHDEKSPSFSVSPAKQMYYCFGC) form a CHC2-type zinc finger. The region spanning 265–348 (DEAILVEGYF…SGQVNLRILN (84 aa)) is the Toprim domain. Mg(2+) is bound by residues glutamate 271, aspartate 317, and aspartate 319.

This sequence belongs to the DnaG primase family. In terms of assembly, monomer. Interacts with DnaB. The cofactor is Zn(2+). Mg(2+) serves as cofactor.

The enzyme catalyses ssDNA + n NTP = ssDNA/pppN(pN)n-1 hybrid + (n-1) diphosphate.. In terms of biological role, RNA polymerase that catalyzes the synthesis of short RNA molecules used as primers for DNA polymerase during DNA replication. This is DNA primase from Synechocystis sp. (strain ATCC 27184 / PCC 6803 / Kazusa).